A 355-amino-acid chain; its full sequence is UDP-N-acetylglucosamine--N-acetylmuramyl-(pentapeptide) pyrophosphoryl-undecaprenol N-acetylglucosamine transferase (355 aa).

Residues 15–17, Asn-127, Arg-163, Ser-191, Ile-244, 263–268, and Gln-288 contribute to the UDP-N-acetyl-alpha-D-glucosamine site; these read TGG and ALTVSE.

This sequence belongs to the glycosyltransferase 28 family. MurG subfamily.

It is found in the cell inner membrane. The catalysed reaction is di-trans,octa-cis-undecaprenyl diphospho-N-acetyl-alpha-D-muramoyl-L-alanyl-D-glutamyl-meso-2,6-diaminopimeloyl-D-alanyl-D-alanine + UDP-N-acetyl-alpha-D-glucosamine = di-trans,octa-cis-undecaprenyl diphospho-[N-acetyl-alpha-D-glucosaminyl-(1-&gt;4)]-N-acetyl-alpha-D-muramoyl-L-alanyl-D-glutamyl-meso-2,6-diaminopimeloyl-D-alanyl-D-alanine + UDP + H(+). It functions in the pathway cell wall biogenesis; peptidoglycan biosynthesis. Cell wall formation. Catalyzes the transfer of a GlcNAc subunit on undecaprenyl-pyrophosphoryl-MurNAc-pentapeptide (lipid intermediate I) to form undecaprenyl-pyrophosphoryl-MurNAc-(pentapeptide)GlcNAc (lipid intermediate II). This Escherichia coli O139:H28 (strain E24377A / ETEC) protein is UDP-N-acetylglucosamine--N-acetylmuramyl-(pentapeptide) pyrophosphoryl-undecaprenol N-acetylglucosamine transferase.